Here is a 322-residue protein sequence, read N- to C-terminus: CRISPR-associated protein Cas1 1 (322 aa).

Residues E149, H214, and E229 each coordinate Mn(2+).

This sequence belongs to the CRISPR-associated endonuclease Cas1 family. Homodimer, forms a heterotetramer with a Cas2 homodimer. It depends on Mg(2+) as a cofactor. Mn(2+) serves as cofactor.

CRISPR (clustered regularly interspaced short palindromic repeat), is an adaptive immune system that provides protection against mobile genetic elements (viruses, transposable elements and conjugative plasmids). CRISPR clusters contain spacers, sequences complementary to antecedent mobile elements, and target invading nucleic acids. CRISPR clusters are transcribed and processed into CRISPR RNA (crRNA). Acts as a dsDNA endonuclease. Involved in the integration of spacer DNA into the CRISPR cassette. The chain is CRISPR-associated protein Cas1 1 from Methanobrevibacter ruminantium (strain ATCC 35063 / DSM 1093 / JCM 13430 / OCM 146 / M1) (Methanobacterium ruminantium).